Reading from the N-terminus, the 310-residue chain is Methionyl-tRNA formyltransferase (310 aa).

S110–P113 is a binding site for (6S)-5,6,7,8-tetrahydrofolate.

Belongs to the Fmt family.

The catalysed reaction is L-methionyl-tRNA(fMet) + (6R)-10-formyltetrahydrofolate = N-formyl-L-methionyl-tRNA(fMet) + (6S)-5,6,7,8-tetrahydrofolate + H(+). Its function is as follows. Attaches a formyl group to the free amino group of methionyl-tRNA(fMet). The formyl group appears to play a dual role in the initiator identity of N-formylmethionyl-tRNA by promoting its recognition by IF2 and preventing the misappropriation of this tRNA by the elongation apparatus. The polypeptide is Methionyl-tRNA formyltransferase (Streptomyces avermitilis (strain ATCC 31267 / DSM 46492 / JCM 5070 / NBRC 14893 / NCIMB 12804 / NRRL 8165 / MA-4680)).